The following is a 516-amino-acid chain: 4-hydroxybenzoate brominase (decarboxylating) (516 aa).

7 residues coordinate FAD: serine 13, glutamate 32, valine 40, phenylalanine 41, histidine 51, valine 102, and glutamine 365.

This sequence belongs to the FMO family. It depends on FAD as a cofactor.

The enzyme catalyses 2 bromide + 4-hydroxybenzoate + 2 NADPH + 2 O2 + 5 H(+) = 2,4-dibromophenol + CO2 + 2 NADP(+) + 4 H2O. The catalysed reaction is bromide + 4-hydroxybenzoate + NADPH + O2 + 2 H(+) = 3-bromo-4-hydroxybenzoate + NADP(+) + 2 H2O. It catalyses the reaction 3-bromo-4-hydroxybenzoate + bromide + NADPH + O2 + 3 H(+) = 2,4-dibromophenol + CO2 + NADP(+) + 2 H2O. It carries out the reaction 3,4-dihydroxybenzoate + 2 bromide + 2 NADPH + 2 O2 + 5 H(+) = 3,5-dibromobenzene-1,2-diol + CO2 + 2 NADP(+) + 4 H2O. The enzyme catalyses 3,4-dihydroxybenzoate + bromide + NADPH + O2 + 2 H(+) = 3-bromo-4,5-dihydroxybenzoate + NADP(+) + 2 H2O. The catalysed reaction is 3-bromo-4,5-dihydroxybenzoate + bromide + NADPH + O2 + 3 H(+) = 3,5-dibromobenzene-1,2-diol + CO2 + NADP(+) + 2 H2O. In terms of biological role, brominase involved in the biosynthesis of polybrominated aromatic organic compounds. Catalyzes the bromination of 4-hydroxybenzoate (4-HBA) to 3-bromo-4-hydroxybenzoate, followed by bromination and decarboxylation of 3-bromo-4-hydroxybenzoate to 2,4-dibromophenol. Can also use 3,4-dihydroxybenzoate, with lower efficiency, forming 3-bromo-4,5-dihydroxybenzoate and 3,5-dibromobenzene-1,2-diol. The protein is 4-hydroxybenzoate brominase (decarboxylating) of Marinomonas mediterranea (strain ATCC 700492 / JCM 21426 / NBRC 103028 / MMB-1).